Here is a 256-residue protein sequence, read N- to C-terminus: Histone H1 (256 aa).

Low complexity-rich tracts occupy residues 1-19 (MSDSAVATSASPVAAPPAT) and 27-43 (KKASGSAGTKAKKASAT). 2 disordered regions span residues 1-53 (MSDS…QQMV) and 108-256 (GKGA…AAKK). Serine 11 carries the post-translational modification Phosphoserine. In terms of domain architecture, H15 spans 45 to 119 (SHPPTQQMVD…GASGSFKLSA (75 aa)). 2 stretches are compositionally biased toward basic and acidic residues: residues 121–140 (AKKEKDPKAKSKVLSAEKKV) and 176–193 (KTAENKKTEKAKAKDAKK). Positions 194 to 229 (TGIIKSKPAATKAKVTAAKPKAVVAKASKAKPAVSA) are enriched in low complexity. A compositionally biased stretch (basic residues) spans 245-256 (KKPKAKTTAAKK).

The protein belongs to the histone H1/H5 family. Post-translationally, phosphorylated in oocytes during prophase I of meiosis.

It is found in the nucleus. The protein localises to the chromosome. In terms of biological role, histones H1 are necessary for the condensation of nucleosome chains into higher-order structures. This Drosophila melanogaster (Fruit fly) protein is Histone H1 (His1).